Consider the following 673-residue polypeptide: Centrosomal protein kizuna (673 aa).

5 disordered regions span residues 175–207, 255–413, 432–480, 494–516, and 613–673; these read TEHK…TDSC, GSNT…ALKL, QTLS…NSVK, ECGR…ILND, and SEAS…DFYD. Composition is skewed to polar residues over residues 196–207 and 255–266; these read QTAQSSNVTDSC and GSNTRHGKSNLS. Composition is skewed to basic and acidic residues over residues 267–293 and 303–316; these read EGKK…DLKC and ILTR…EKRA. Residues Ser-317 and Ser-321 each carry the phosphoserine modification. The span at 331 to 357 shows a compositional bias: basic and acidic residues; that stretch reads SENKWSQEKHSPWEGVSDHLAHREPKS. Thr-379 bears the Phosphothreonine; by PLK1 mark. Residues 471-480 are compositionally biased toward basic and acidic residues; sequence TLKEHDNSVK. Composition is skewed to low complexity over residues 503-512 and 613-625; these read SSESSCSLPS and SEAS…GSPL. Phosphoserine occurs at positions 647, 650, and 652.

The protein belongs to the kizuna family. As to quaternary structure, interacts with AKAP9, CEP72, ODF2, PCNT and TUBGCP2. Post-translationally, phosphorylation at Thr-379 by PLK1 is not needed for centrosomal localization or pericentriolar material expansion but is indispensable for spindle-pole stabilization.

It is found in the cytoplasm. Its subcellular location is the cytoskeleton. It localises to the microtubule organizing center. The protein localises to the centrosome. The protein resides in the cilium basal body. Centrosomal protein required for establishing a robust mitotic centrosome architecture that can endure the forces that converge on the centrosomes during spindle formation. Required for stabilizing the expanded pericentriolar material around the centriole. The chain is Centrosomal protein kizuna (KIZ) from Homo sapiens (Human).